The primary structure comprises 92 residues: C-C motif chemokine 3 (92 aa).

Residues 1–23 (MQVSTAALAVLLCTMALCNQFSA) form the signal peptide. 2 disulfides stabilise this stretch: Cys-33–Cys-57 and Cys-34–Cys-73.

This sequence belongs to the intercrine beta (chemokine CC) family. Self-associates. Also heterodimer of MIP-1-alpha(4-69) and MIP-1-beta(3-69). Interacts with CCR1.

The protein localises to the secreted. Functionally, monokine with inflammatory and chemokinetic properties. Binds to CCR1, CCR4 and CCR5. One of the major HIV-suppressive factors produced by CD8+ T-cells. Recombinant MIP-1-alpha induces a dose-dependent inhibition of different strains of HIV-1, HIV-2, and simian immunodeficiency virus (SIV). The protein is C-C motif chemokine 3 (CCL3) of Pan troglodytes (Chimpanzee).